A 68-amino-acid polypeptide reads, in one-letter code: Probable tautomerase jhp_0858 (68 aa).

The active-site Proton acceptor; via imino nitrogen is proline 2.

Belongs to the 4-oxalocrotonate tautomerase family.

The chain is Probable tautomerase jhp_0858 from Helicobacter pylori (strain J99 / ATCC 700824) (Campylobacter pylori J99).